The sequence spans 616 residues: Dihydroxy-acid dehydratase (616 aa).

Asp81 contacts Mg(2+). Cys122 is a [2Fe-2S] cluster binding site. Positions 123 and 124 each coordinate Mg(2+). Residue Lys124 is modified to N6-carboxylysine. [2Fe-2S] cluster is bound at residue Cys195. Glu491 contributes to the Mg(2+) binding site. Ser517 functions as the Proton acceptor in the catalytic mechanism.

Belongs to the IlvD/Edd family. As to quaternary structure, homodimer. [2Fe-2S] cluster is required as a cofactor. It depends on Mg(2+) as a cofactor.

The catalysed reaction is (2R)-2,3-dihydroxy-3-methylbutanoate = 3-methyl-2-oxobutanoate + H2O. The enzyme catalyses (2R,3R)-2,3-dihydroxy-3-methylpentanoate = (S)-3-methyl-2-oxopentanoate + H2O. Its pathway is amino-acid biosynthesis; L-isoleucine biosynthesis; L-isoleucine from 2-oxobutanoate: step 3/4. It functions in the pathway amino-acid biosynthesis; L-valine biosynthesis; L-valine from pyruvate: step 3/4. Functionally, functions in the biosynthesis of branched-chain amino acids. Catalyzes the dehydration of (2R,3R)-2,3-dihydroxy-3-methylpentanoate (2,3-dihydroxy-3-methylvalerate) into 2-oxo-3-methylpentanoate (2-oxo-3-methylvalerate) and of (2R)-2,3-dihydroxy-3-methylbutanoate (2,3-dihydroxyisovalerate) into 2-oxo-3-methylbutanoate (2-oxoisovalerate), the penultimate precursor to L-isoleucine and L-valine, respectively. The chain is Dihydroxy-acid dehydratase from Erwinia tasmaniensis (strain DSM 17950 / CFBP 7177 / CIP 109463 / NCPPB 4357 / Et1/99).